A 591-amino-acid chain; its full sequence is Serine/threonine-protein kinase PAK 4 (591 aa).

A CRIB domain is found at 11–24 (ISAPSNFEHRVHTG). The linker stretch occupies residues 25–320 (FDQHEQKFTG…VVDPGDPRSY (296 aa)). Ser-41 carries the post-translational modification Phosphoserine. Lys-78 bears the N6-methyllysine mark. The interval 95-301 (TRSNSLRRDS…PQREPQRVSH (207 aa)) is disordered. 2 positions are modified to phosphoserine: Ser-104 and Ser-148. The segment covering 149 to 164 (GDRRRAGPEKRPKSSR) has biased composition (basic and acidic residues). Phosphoserine is present on residues Ser-167 and Ser-181. Thr-187 bears the Phosphothreonine mark. The span at 191–202 (AGLASGAKLAAG) shows a compositional bias: low complexity. The residue at position 195 (Ser-195) is a Phosphoserine. Thr-207 is modified (phosphothreonine). Low complexity predominate over residues 242–260 (SSSSSSRPPTRARGAPSPG). A phosphoserine mark is found at Ser-258 and Ser-267. The span at 271–290 (LAPPACTPAAPAVPGPPGPR) shows a compositional bias: pro residues. Ser-291 bears the Phosphoserine mark. Residues 292-301 (PQREPQRVSH) are compositionally biased toward basic and acidic residues. The tract at residues 298–323 (RVSHEQFRAALQLVVDPGDPRSYLDN) is GEF-interaction domain (GID). The 252-residue stretch at 321-572 (LDNFIKIGEG…AAELLKHPFL (252 aa)) folds into the Protein kinase domain. ATP is bound by residues 327 to 335 (IGEGSTGIV), Lys-350, and 396 to 398 (EFL). The active-site Proton acceptor is Asp-440. 458–460 (DFG) contacts ATP. Ser-474 carries the post-translational modification Phosphoserine; by autocatalysis.

This sequence belongs to the protein kinase superfamily. STE Ser/Thr protein kinase family. STE20 subfamily. As to quaternary structure, interacts with FGFR2 and GRB2. Interacts tightly with GTP-bound but not GDP-bound CDC42/p21 and weakly with RAC1. Interacts with INKA1. Interacts with SH3RF2. Interacts with RHOU and PAXI; the PAK4-RHOU complex protects RHOU from ubiquitination and acts as a scaffold to suppport paxillin/PAXI phosphorylation. Autophosphorylated on serine residues when activated by CDC42/p21. Phosphorylated on tyrosine residues upon stimulation of FGFR2. Methylated by SETD6. Post-translationally, polyubiquitinated, leading to its proteasomal degradation. In terms of tissue distribution, highest expression in prostate, testis and colon.

The protein resides in the cytoplasm. The enzyme catalyses L-seryl-[protein] + ATP = O-phospho-L-seryl-[protein] + ADP + H(+). It catalyses the reaction L-threonyl-[protein] + ATP = O-phospho-L-threonyl-[protein] + ADP + H(+). With respect to regulation, inhibited by INKA1; which inhibits the serine/threonine-protein kinase activity by binding PAK4 in a substrate-like manner. In terms of biological role, serine/threonine-protein kinase that plays a role in a variety of different signaling pathways including cytoskeleton regulation, cell adhesion turnover, cell migration, growth, proliferation or cell survival. Activation by various effectors including growth factor receptors or active CDC42 and RAC1 results in a conformational change and a subsequent autophosphorylation on several serine and/or threonine residues. Phosphorylates and inactivates the protein phosphatase SSH1, leading to increased inhibitory phosphorylation of the actin binding/depolymerizing factor cofilin. Decreased cofilin activity may lead to stabilization of actin filaments. Phosphorylates LIMK1, a kinase that also inhibits the activity of cofilin. Phosphorylates integrin beta5/ITGB5 and thus regulates cell motility. Phosphorylates ARHGEF2 and activates the downstream target RHOA that plays a role in the regulation of assembly of focal adhesions and actin stress fibers. Stimulates cell survival by phosphorylating the BCL2 antagonist of cell death BAD. Alternatively, inhibits apoptosis by preventing caspase-8 binding to death domain receptors in a kinase independent manner. Plays a role in cell-cycle progression by controlling levels of the cell-cycle regulatory protein CDKN1A and by phosphorylating RAN. Promotes kinase-independent stabilization of RHOU, thereby contributing to focal adhesion disassembly during cell migration. This Homo sapiens (Human) protein is Serine/threonine-protein kinase PAK 4.